A 292-amino-acid polypeptide reads, in one-letter code: Protease HtpX (292 aa).

Helical transmembrane passes span 5 to 25 (IFLFLLTNLAVLMLAGIVMSL) and 34 to 54 (SGLLVMAAIFGFGGSFISLLL). His-140 contacts Zn(2+). Residue Glu-141 is part of the active site. His-144 contacts Zn(2+). 2 helical membrane-spanning segments follow: residues 155-175 (LLQGVLNTFVIVLARVVGGII) and 193-213 (IIVFALEMVFGLFATMIAMWF). Glu-218 is a binding site for Zn(2+).

It belongs to the peptidase M48B family. Requires Zn(2+) as cofactor.

The protein localises to the cell inner membrane. The chain is Protease HtpX from Xanthomonas euvesicatoria pv. vesicatoria (strain 85-10) (Xanthomonas campestris pv. vesicatoria).